Consider the following 254-residue polypeptide: Phycobilisome rod-core linker polypeptide CpcG3 (254 aa).

The 181-residue stretch at 11-191 (SSQNHRVKSF…DFQETAGTVK (181 aa)) folds into the PBS-linker domain.

This sequence belongs to the phycobilisome linker protein family. As to quaternary structure, the phycobilisome is a hemidiscoidal structure that is composed of two distinct substructures: a core complex and a number of rods radiating from the core.

It is found in the cellular thylakoid membrane. Rod-core linker protein required for attachment of phycocyanin to allophycocyanin in cores of phycobilisomes. Functionally, linker polypeptides determine the state of aggregation and the location of the disk-shaped phycobiliprotein units within the phycobilisome and modulate their spectroscopic properties in order to mediate a directed and optimal energy transfer. The polypeptide is Phycobilisome rod-core linker polypeptide CpcG3 (cpcG3) (Mastigocladus laminosus (Fischerella sp.)).